A 198-amino-acid chain; its full sequence is GTP cyclohydrolase 1 (198 aa).

Zn(2+) contacts are provided by Cys87, His90, and Cys158.

The protein belongs to the GTP cyclohydrolase I family. In terms of assembly, homomer.

The catalysed reaction is GTP + H2O = 7,8-dihydroneopterin 3'-triphosphate + formate + H(+). It functions in the pathway cofactor biosynthesis; 7,8-dihydroneopterin triphosphate biosynthesis; 7,8-dihydroneopterin triphosphate from GTP: step 1/1. The protein is GTP cyclohydrolase 1 of Janthinobacterium sp. (strain Marseille) (Minibacterium massiliensis).